The primary structure comprises 373 residues: Type 2 DNA topoisomerase 6 subunit A (373 aa).

The 139-residue stretch at 15-153 folds into the Topo IIA-type catalytic domain; it reads QGDTLAKERL…FHMRPEEDGA (139 aa). The active-site O-(5'-phospho-DNA)-tyrosine intermediate is Tyr110. Mg(2+) contacts are provided by Glu206 and Asp258.

The protein belongs to the TOP6A family. Homodimer. Heterotetramer of two Top6A and two Top6B chains. Mg(2+) is required as a cofactor.

The catalysed reaction is ATP-dependent breakage, passage and rejoining of double-stranded DNA.. Relaxes both positive and negative superturns and exhibits a strong decatenase activity. The sequence is that of Type 2 DNA topoisomerase 6 subunit A from Methanosarcina acetivorans (strain ATCC 35395 / DSM 2834 / JCM 12185 / C2A).